A 475-amino-acid chain; its full sequence is Splicing factor U2AF 65 kDa subunit (475 aa).

The interval 1 to 90 (MSDFDEFERQ…RHEKKKKVRK (90 aa)) is disordered. The residue at position 2 (Ser-2) is an N-acetylserine. Ser-2 is subject to Phosphoserine. Positions 2-93 (SDFDEFERQL…KKKKVRKYWD (92 aa)) are required for interaction with PRPF19. Over residues 7 to 22 (FERQLNENKQERDKEN) the composition is skewed to basic and acidic residues. The residue at position 15 (Lys-15) is a 5-hydroxylysine; by JMJD6; alternate. Residue Lys-15 forms a Glycyl lysine isopeptide (Lys-Gly) (interchain with G-Cter in SUMO2); alternate linkage. The segment at 17-47 (ERDKENRHRKRSHSRSRSRDRKRRSRSRDRR) is necessary and sufficient to stimulate pre-mRNAs 3'-end cleavage in a CFIm complex-dependent manner. Basic residues predominate over residues 23 to 46 (RHRKRSHSRSRSRDRKRRSRSRDR). A compositionally biased stretch (basic and acidic residues) spans 47-56 (RNRDQRSASR). Lys-70 is covalently cross-linked (Glycyl lysine isopeptide (Lys-Gly) (interchain with G-Cter in SUMO2); alternate). N6-acetyllysine; alternate is present on Lys-70. Ser-79 carries the phosphoserine modification. Residues 79–89 (SPRHEKKKKVR) show a composition bias toward basic residues. 3 RRM domains span residues 149-231 (RRLY…RPHD), 259-337 (HKLF…RASV), and 385-466 (LPEE…YCDP). Lys-276 is modified (5-hydroxylysine; by JMJD6). Ser-294 is modified (phosphoserine).

It belongs to the splicing factor SR family. Interacts with U2AF1L4. Heterodimer with U2AF1. Binds unphosphorylated SF1. Interacts with SCAF11 and SNW1. Interacts with ZRSR2/U2AF1-RS2. Interacts with RBM17. Interacts with PRPF19; the interaction is direct. Interacts with POLR2A (via the C-terminal domain); Interacts with PRPF19; the interaction is direct. Interacts with POLR2A (via the C-terminal domain); recruits PRPF19 and the Prp19 complex to the pre-mRNA. Interacts with KHDC4 (Isoform 2). Interacts with ZRSR2. Interacts with the SF3B complex composed of SF3B1, SF3B2, SF3B3, SF3B4, SF3B5, SF3B6 and PHF5A. Interacts (via N-terminus) with CPSF7 (via C-terminus); this interaction stimulates pre-mRNA 3'-end processing by promoting the recruitment of the CFIm complex to cleavage and polyadenylation signals. Interacts with ARGLU1; interaction may be involved in ARGLU1-mediated modulation of alternative splicing. Lysyl-hydroxylation at Lys-15 and Lys-276 affects the mRNA splicing activity of the protein, leading to regulate some, but not all, alternative splicing events.

The protein resides in the nucleus. Its function is as follows. Plays a role in pre-mRNA splicing and 3'-end processing. By recruiting PRPF19 and the PRP19C/Prp19 complex/NTC/Nineteen complex to the RNA polymerase II C-terminal domain (CTD), and thereby pre-mRNA, may couple transcription to splicing. Required for the export of mRNA out of the nucleus, even if the mRNA is encoded by an intron-less gene. Positively regulates pre-mRNA 3'-end processing by recruiting the CFIm complex to cleavage and polyadenylation signals. This chain is Splicing factor U2AF 65 kDa subunit (U2af2), found in Mus musculus (Mouse).